A 118-amino-acid polypeptide reads, in one-letter code: Iron-sulfur cluster assembly protein CyaY (118 aa).

Belongs to the frataxin family.

Involved in iron-sulfur (Fe-S) cluster assembly. May act as a regulator of Fe-S biogenesis. The polypeptide is Iron-sulfur cluster assembly protein CyaY (Buchnera aphidicola subsp. Baizongia pistaciae (strain Bp)).